The following is a 503-amino-acid chain: ATP synthase subunit alpha (503 aa).

An ATP-binding site is contributed by 170–177 (GDRQTGKT).

Belongs to the ATPase alpha/beta chains family. In terms of assembly, F-type ATPases have 2 components, CF(1) - the catalytic core - and CF(0) - the membrane proton channel. CF(1) has five subunits: alpha(3), beta(3), gamma(1), delta(1), epsilon(1). CF(0) has three main subunits: a(1), b(2) and c(9-12). The alpha and beta chains form an alternating ring which encloses part of the gamma chain. CF(1) is attached to CF(0) by a central stalk formed by the gamma and epsilon chains, while a peripheral stalk is formed by the delta and b chains.

The protein resides in the cell inner membrane. It carries out the reaction ATP + H2O + 4 H(+)(in) = ADP + phosphate + 5 H(+)(out). Its function is as follows. Produces ATP from ADP in the presence of a proton gradient across the membrane. The alpha chain is a regulatory subunit. The sequence is that of ATP synthase subunit alpha from Thermotoga neapolitana (strain ATCC 49049 / DSM 4359 / NBRC 107923 / NS-E).